The chain runs to 247 residues: Uridylate kinase (247 aa).

17–20 (KFSG) contacts ATP. G59 is a binding site for UMP. G60 and R64 together coordinate ATP. UMP is bound by residues D79 and 140–147 (TGNPFFTT). Residues T167, Y173, and D176 each contribute to the ATP site.

Belongs to the UMP kinase family. Homohexamer.

It is found in the cytoplasm. The catalysed reaction is UMP + ATP = UDP + ADP. It participates in pyrimidine metabolism; CTP biosynthesis via de novo pathway; UDP from UMP (UMPK route): step 1/1. With respect to regulation, inhibited by UTP. In terms of biological role, catalyzes the reversible phosphorylation of UMP to UDP. The sequence is that of Uridylate kinase from Legionella pneumophila subsp. pneumophila (strain Philadelphia 1 / ATCC 33152 / DSM 7513).